We begin with the raw amino-acid sequence, 391 residues long: Chorismate synthase (391 aa).

NADP(+) is bound by residues arginine 39 and arginine 45. FMN-binding positions include 133-135, 254-255, glycine 299, 314-318, and arginine 340; these read RAS, QA, and KPIAT.

The protein belongs to the chorismate synthase family. In terms of assembly, homotetramer. FMNH2 is required as a cofactor.

It catalyses the reaction 5-O-(1-carboxyvinyl)-3-phosphoshikimate = chorismate + phosphate. It functions in the pathway metabolic intermediate biosynthesis; chorismate biosynthesis; chorismate from D-erythrose 4-phosphate and phosphoenolpyruvate: step 7/7. In terms of biological role, catalyzes the anti-1,4-elimination of the C-3 phosphate and the C-6 proR hydrogen from 5-enolpyruvylshikimate-3-phosphate (EPSP) to yield chorismate, which is the branch point compound that serves as the starting substrate for the three terminal pathways of aromatic amino acid biosynthesis. This reaction introduces a second double bond into the aromatic ring system. The polypeptide is Chorismate synthase (Symbiobacterium thermophilum (strain DSM 24528 / JCM 14929 / IAM 14863 / T)).